The following is a 247-amino-acid chain: Elongation factor Ts (247 aa).

Residues 82–85 form an involved in Mg(2+) ion dislocation from EF-Tu region; the sequence is TDFV.

This sequence belongs to the EF-Ts family.

Its subcellular location is the cytoplasm. In terms of biological role, associates with the EF-Tu.GDP complex and induces the exchange of GDP to GTP. It remains bound to the aminoacyl-tRNA.EF-Tu.GTP complex up to the GTP hydrolysis stage on the ribosome. The protein is Elongation factor Ts (tsf) of Arthrospira platensis (Spirulina platensis).